The primary structure comprises 480 residues: Adenylosuccinate lyase (480 aa).

Arginine 14, tyrosine 15, arginine 79, histidine 80, and aspartate 81 together coordinate AMP. Histidine 80 is a fumarate binding site. Residue histidine 153 is the Proton donor/acceptor of the active site. Glutamine 236 is a binding site for AMP. Glutamine 236 serves as a coordination point for fumarate. Glutamine 236 lines the N(6)-(1,2-dicarboxyethyl)-AMP pocket. Serine 284 functions as the Proton donor/acceptor in the catalytic mechanism. Residues serine 285, lysine 290, and asparagine 292 each contribute to the fumarate site. The N(6)-(1,2-dicarboxyethyl)-AMP site is built by serine 285, lysine 290, and asparagine 292. Arginine 298 provides a ligand contact to AMP. 3 residues coordinate N(6)-(1,2-dicarboxyethyl)-AMP: arginine 324, serine 329, and arginine 333. The AMP site is built by serine 329 and arginine 333.

Belongs to the lyase 1 family. Adenylosuccinate lyase subfamily. As to quaternary structure, homotetramer.

The enzyme catalyses N(6)-(1,2-dicarboxyethyl)-AMP = fumarate + AMP. Its pathway is purine metabolism; AMP biosynthesis via salvage pathway. Its function is as follows. Catalyzes conversion of succinyladenosine monophosphate (SAMP) to AMP and fumarate on the purine salvage pathway. This chain is Adenylosuccinate lyase, found in Schistosoma mansoni (Blood fluke).